We begin with the raw amino-acid sequence, 356 residues long: Alanine racemase, catabolic (356 aa).

Catalysis depends on K35, which acts as the Proton acceptor; specific for D-alanine. K35 carries the N6-(pyridoxal phosphate)lysine modification. A substrate-binding site is contributed by R130. Y253 (proton acceptor; specific for L-alanine) is an active-site residue. A substrate-binding site is contributed by M301.

This sequence belongs to the alanine racemase family. Requires pyridoxal 5'-phosphate as cofactor.

It carries out the reaction L-alanine = D-alanine. In terms of biological role, isomerizes L-alanine to D-alanine which is then oxidized to pyruvate by DadA. The protein is Alanine racemase, catabolic (dadX) of Escherichia coli (strain K12).